The following is a 234-amino-acid chain: Large ribosomal subunit protein uL1 (234 aa).

This sequence belongs to the universal ribosomal protein uL1 family. Part of the 50S ribosomal subunit.

In terms of biological role, binds directly to 23S rRNA. The L1 stalk is quite mobile in the ribosome, and is involved in E site tRNA release. Protein L1 is also a translational repressor protein, it controls the translation of the L11 operon by binding to its mRNA. Functionally, peptides originating from the N-terminal end of L1 have antibacterial activity against bacteria such as E.coli and B.megaterium and modest antifungal activities. Has no effect on H.pylori itself. Peptides are not hemolytic against mammalian cells. These peptides may be released in the stomach during altruistic lysis to kill other fast growing bacteria. The polypeptide is Large ribosomal subunit protein uL1 (Helicobacter pylori (strain ATCC 700392 / 26695) (Campylobacter pylori)).